A 550-amino-acid polypeptide reads, in one-letter code: Hydroxylamine reductase (550 aa).

Cys-3, Cys-6, Cys-18, and Cys-25 together coordinate [2Fe-2S] cluster. Hybrid [4Fe-2O-2S] cluster contacts are provided by His-249, Glu-273, Cys-317, Cys-405, Cys-433, Cys-458, Glu-492, and Lys-494. Cys-405 is subject to Cysteine persulfide.

It belongs to the HCP family. [2Fe-2S] cluster is required as a cofactor. It depends on hybrid [4Fe-2O-2S] cluster as a cofactor.

It is found in the cytoplasm. The catalysed reaction is A + NH4(+) + H2O = hydroxylamine + AH2 + H(+). Its function is as follows. Catalyzes the reduction of hydroxylamine to form NH(3) and H(2)O. In Escherichia coli O6:H1 (strain CFT073 / ATCC 700928 / UPEC), this protein is Hydroxylamine reductase.